The chain runs to 183 residues: Peptidyl-tRNA hydrolase (183 aa).

TRNA is bound at residue Tyr14. His19 functions as the Proton acceptor in the catalytic mechanism. The tRNA site is built by Tyr64, Asn66, and Asn112.

This sequence belongs to the PTH family. Monomer.

It localises to the cytoplasm. The catalysed reaction is an N-acyl-L-alpha-aminoacyl-tRNA + H2O = an N-acyl-L-amino acid + a tRNA + H(+). Its function is as follows. Hydrolyzes ribosome-free peptidyl-tRNAs (with 1 or more amino acids incorporated), which drop off the ribosome during protein synthesis, or as a result of ribosome stalling. Catalyzes the release of premature peptidyl moieties from peptidyl-tRNA molecules trapped in stalled 50S ribosomal subunits, and thus maintains levels of free tRNAs and 50S ribosomes. In Anaplasma phagocytophilum (strain HZ), this protein is Peptidyl-tRNA hydrolase.